Consider the following 380-residue polypeptide: Cytochrome b (380 aa).

4 helical membrane-spanning segments follow: residues 34–54 (FGSL…LLAT), 78–99 (WLIR…YLHI), 114–134 (WNTG…GYVL), and 179–199 (FFAL…IHLT). The heme b site is built by H84 and H98. Heme b is bound by residues H183 and H197. H202 provides a ligand contact to a ubiquinone. Helical transmembrane passes span 227–247 (LKDI…ALFS), 289–309 (LGGV…PLLH), 321–341 (FSQF…WVGS), and 348–368 (FIII…LLFP).

This sequence belongs to the cytochrome b family. In terms of assembly, the cytochrome bc1 complex contains 11 subunits: 3 respiratory subunits (MT-CYB, CYC1 and UQCRFS1), 2 core proteins (UQCRC1 and UQCRC2) and 6 low-molecular weight proteins (UQCRH/QCR6, UQCRB/QCR7, UQCRQ/QCR8, UQCR10/QCR9, UQCR11/QCR10 and a cleavage product of UQCRFS1). This cytochrome bc1 complex then forms a dimer. Requires heme b as cofactor.

Its subcellular location is the mitochondrion inner membrane. In terms of biological role, component of the ubiquinol-cytochrome c reductase complex (complex III or cytochrome b-c1 complex) that is part of the mitochondrial respiratory chain. The b-c1 complex mediates electron transfer from ubiquinol to cytochrome c. Contributes to the generation of a proton gradient across the mitochondrial membrane that is then used for ATP synthesis. The sequence is that of Cytochrome b (MT-CYB) from Alle alle (Dovekie).